We begin with the raw amino-acid sequence, 317 residues long: 4-hydroxy-3-methylbut-2-enyl diphosphate reductase (317 aa).

Cys-12 is a [4Fe-4S] cluster binding site. Residues His-41 and His-74 each coordinate (2E)-4-hydroxy-3-methylbut-2-enyl diphosphate. Dimethylallyl diphosphate-binding residues include His-41 and His-74. Positions 41 and 74 each coordinate isopentenyl diphosphate. A [4Fe-4S] cluster-binding site is contributed by Cys-97. His-125 is a (2E)-4-hydroxy-3-methylbut-2-enyl diphosphate binding site. His-125 serves as a coordination point for dimethylallyl diphosphate. His-125 contributes to the isopentenyl diphosphate binding site. Glu-127 acts as the Proton donor in catalysis. Residue Thr-168 coordinates (2E)-4-hydroxy-3-methylbut-2-enyl diphosphate. Cys-198 is a [4Fe-4S] cluster binding site. 4 residues coordinate (2E)-4-hydroxy-3-methylbut-2-enyl diphosphate: Ser-226, Ser-227, Asn-228, and Ser-270. Residues Ser-226, Ser-227, Asn-228, and Ser-270 each coordinate dimethylallyl diphosphate. Residues Ser-226, Ser-227, Asn-228, and Ser-270 each contribute to the isopentenyl diphosphate site.

This sequence belongs to the IspH family. Homodimer. [4Fe-4S] cluster is required as a cofactor.

The catalysed reaction is isopentenyl diphosphate + 2 oxidized [2Fe-2S]-[ferredoxin] + H2O = (2E)-4-hydroxy-3-methylbut-2-enyl diphosphate + 2 reduced [2Fe-2S]-[ferredoxin] + 2 H(+). It carries out the reaction dimethylallyl diphosphate + 2 oxidized [2Fe-2S]-[ferredoxin] + H2O = (2E)-4-hydroxy-3-methylbut-2-enyl diphosphate + 2 reduced [2Fe-2S]-[ferredoxin] + 2 H(+). It functions in the pathway isoprenoid biosynthesis; dimethylallyl diphosphate biosynthesis; dimethylallyl diphosphate from (2E)-4-hydroxy-3-methylbutenyl diphosphate: step 1/1. It participates in isoprenoid biosynthesis; isopentenyl diphosphate biosynthesis via DXP pathway; isopentenyl diphosphate from 1-deoxy-D-xylulose 5-phosphate: step 6/6. Its function is as follows. Catalyzes the conversion of 1-hydroxy-2-methyl-2-(E)-butenyl 4-diphosphate (HMBPP) into a mixture of isopentenyl diphosphate (IPP) and dimethylallyl diphosphate (DMAPP). Acts in the terminal step of the DOXP/MEP pathway for isoprenoid precursor biosynthesis. The sequence is that of 4-hydroxy-3-methylbut-2-enyl diphosphate reductase from Yersinia pseudotuberculosis serotype O:1b (strain IP 31758).